Here is a 308-residue protein sequence, read N- to C-terminus: Bifunctional protein FolD (308 aa).

Residue 170–172 coordinates NADP(+); the sequence is GKG.

This sequence belongs to the tetrahydrofolate dehydrogenase/cyclohydrolase family. In terms of assembly, homodimer.

It catalyses the reaction (6R)-5,10-methylene-5,6,7,8-tetrahydrofolate + NADP(+) = (6R)-5,10-methenyltetrahydrofolate + NADPH. It carries out the reaction (6R)-5,10-methenyltetrahydrofolate + H2O = (6R)-10-formyltetrahydrofolate + H(+). The protein operates within one-carbon metabolism; tetrahydrofolate interconversion. Catalyzes the oxidation of 5,10-methylenetetrahydrofolate to 5,10-methenyltetrahydrofolate and then the hydrolysis of 5,10-methenyltetrahydrofolate to 10-formyltetrahydrofolate. The protein is Bifunctional protein FolD of Pyrobaculum calidifontis (strain DSM 21063 / JCM 11548 / VA1).